The following is a 106-amino-acid chain: UPF0145 protein Cthe_0398 (106 aa).

Belongs to the UPF0145 family.

This chain is UPF0145 protein Cthe_0398, found in Acetivibrio thermocellus (strain ATCC 27405 / DSM 1237 / JCM 9322 / NBRC 103400 / NCIMB 10682 / NRRL B-4536 / VPI 7372) (Clostridium thermocellum).